Reading from the N-terminus, the 230-residue chain is MKQLEELLSTSFDIQFNDLTLLETAFTHTSYANEHRLLNVSHNERLEFLGDAVLQLIISEYLFAKYPKKTEGDMSKLRSMIVREESLAGFSRFCSFDAYIKLGKGEEKSGGRRRDTILGDLFEAFLGALLLDKGIDAVRRFLKQVMIPQVEKGNFERVKDYKTCLQEFLQTKGDVAIDYQVISEKGPAHAKQFEVSIVVNGAVLSKGLGKSKKLAEQDAAKNALAQLSEV.

Residues 1 to 134 (MKQLEELLST…FLGALLLDKG (134 aa)) enclose the RNase III domain. Glu-47 is a Mg(2+) binding site. The active site involves Asp-51. The Mg(2+) site is built by Asp-120 and Glu-123. Glu-123 is an active-site residue. The DRBM domain occupies 160–229 (DYKTCLQEFL…AKNALAQLSE (70 aa)).

It belongs to the ribonuclease III family. In terms of assembly, homodimer. Mg(2+) serves as cofactor.

It localises to the cytoplasm. The catalysed reaction is Endonucleolytic cleavage to 5'-phosphomonoester.. In terms of biological role, digests double-stranded RNA. Involved in the processing of primary rRNA transcript to yield the immediate precursors to the large and small rRNAs (23S and 16S). Processes some mRNAs, and tRNAs when they are encoded in the rRNA operon. Processes pre-crRNA and tracrRNA of type II CRISPR loci if present in the organism. The protein is Ribonuclease 3 of Streptococcus pyogenes serotype M3 (strain SSI-1).